The chain runs to 519 residues: MGYFWFPWFSAIFVAVFSYYIWQWTFWRRRGVVGPMGFPVLGVFLNSLDNNFPFPLQCREWTKKFGKIYGFTEGTLKTLVISDPELVHEVFVTQYDNFYGRKRNPIQGDSEKEKRTNLFAAQGFRWKRLRAISSPTFSNSSLRKLYQTVEDSALELLRHIEKQSAGGKQIDMLKFYQEFTLDVIGRIAMGQTDSQMFKNPIMPIVSKLFQGNFAKLFLIGGIFPTFLVEIIRQILLKNLKVGSFRKINEITLDAIHNRIKQREEDQKNGIEIGEPADFIDLFLDAKAEDVEHFGENNGDFSKSTTYTNRQLTTEEIVGQCTVFLIAGFDTTALSLSYATYLLATHPEIQKKLQEEVNRECPNPEVTIDQLSKLKYMECVFKEALRLYPLGAFANSRRCMRNTKLGNMKVEVGTMIQVDTWTLHTDPNIWGDDAEDFKPERWQTPNSDQIYQKSGYIPFGLGPRQCIGMRLAYMEEKILLVHILRKFTFETGAKTEIPLKLIGRATTQPESVWMHLNPRN.

Heme is bound at residue Cys465.

It belongs to the cytochrome P450 family. Heme is required as a cofactor.

Its function is as follows. Cytochromes P450 are a group of heme-thiolate monooxygenases. They oxidize a variety of structurally unrelated compounds, including steroids, fatty acids, and xenobiotics. The polypeptide is Putative cytochrome P450 CYP13A1 (cyp-13A1) (Caenorhabditis elegans).